The chain runs to 212 residues: Imidazole glycerol phosphate synthase subunit HisH (212 aa).

Positions 1 to 211 constitute a Glutamine amidotransferase type-1 domain; it reads MIGVIDYGMG…TKMAAEQQVK (211 aa). Cysteine 79 acts as the Nucleophile in catalysis. Active-site residues include histidine 186 and glutamate 188.

Heterodimer of HisH and HisF.

It is found in the cytoplasm. The catalysed reaction is 5-[(5-phospho-1-deoxy-D-ribulos-1-ylimino)methylamino]-1-(5-phospho-beta-D-ribosyl)imidazole-4-carboxamide + L-glutamine = D-erythro-1-(imidazol-4-yl)glycerol 3-phosphate + 5-amino-1-(5-phospho-beta-D-ribosyl)imidazole-4-carboxamide + L-glutamate + H(+). It catalyses the reaction L-glutamine + H2O = L-glutamate + NH4(+). It participates in amino-acid biosynthesis; L-histidine biosynthesis; L-histidine from 5-phospho-alpha-D-ribose 1-diphosphate: step 5/9. In terms of biological role, IGPS catalyzes the conversion of PRFAR and glutamine to IGP, AICAR and glutamate. The HisH subunit catalyzes the hydrolysis of glutamine to glutamate and ammonia as part of the synthesis of IGP and AICAR. The resulting ammonia molecule is channeled to the active site of HisF. In Bacillus velezensis (strain DSM 23117 / BGSC 10A6 / LMG 26770 / FZB42) (Bacillus amyloliquefaciens subsp. plantarum), this protein is Imidazole glycerol phosphate synthase subunit HisH.